Here is a 187-residue protein sequence, read N- to C-terminus: Ribosome-recycling factor (187 aa).

This sequence belongs to the RRF family.

Its subcellular location is the cytoplasm. Its function is as follows. Responsible for the release of ribosomes from messenger RNA at the termination of protein biosynthesis. May increase the efficiency of translation by recycling ribosomes from one round of translation to another. This Methylobacterium sp. (strain 4-46) protein is Ribosome-recycling factor.